We begin with the raw amino-acid sequence, 323 residues long: Phosphoribosylaminoimidazole-succinocarboxamide synthase (323 aa).

The protein belongs to the SAICAR synthetase family.

It catalyses the reaction 5-amino-1-(5-phospho-D-ribosyl)imidazole-4-carboxylate + L-aspartate + ATP = (2S)-2-[5-amino-1-(5-phospho-beta-D-ribosyl)imidazole-4-carboxamido]succinate + ADP + phosphate + 2 H(+). The protein operates within purine metabolism; IMP biosynthesis via de novo pathway; 5-amino-1-(5-phospho-D-ribosyl)imidazole-4-carboxamide from 5-amino-1-(5-phospho-D-ribosyl)imidazole-4-carboxylate: step 1/2. This Azobacteroides pseudotrichonymphae genomovar. CFP2 protein is Phosphoribosylaminoimidazole-succinocarboxamide synthase.